Here is a 336-residue protein sequence, read N- to C-terminus: Protein-glutamate methylesterase/protein-glutamine glutaminase 3 (336 aa).

One can recognise a Response regulatory domain in the interval 2-119 (KIAIVNDMPM…PNPREAAAPL (118 aa)). D53 is modified (4-aspartylphosphate). The CheB-type methylesterase domain occupies 147–336 (VSRRDRLVAI…APRLMEVFTQ (190 aa)). Catalysis depends on residues S159, H186, and D279.

Belongs to the CheB family. Post-translationally, phosphorylated by CheA. Phosphorylation of the N-terminal regulatory domain activates the methylesterase activity.

It is found in the cytoplasm. It carries out the reaction [protein]-L-glutamate 5-O-methyl ester + H2O = L-glutamyl-[protein] + methanol + H(+). It catalyses the reaction L-glutaminyl-[protein] + H2O = L-glutamyl-[protein] + NH4(+). Its function is as follows. Involved in chemotaxis. Part of a chemotaxis signal transduction system that modulates chemotaxis in response to various stimuli. Catalyzes the demethylation of specific methylglutamate residues introduced into the chemoreceptors (methyl-accepting chemotaxis proteins or MCP) by CheR. Also mediates the irreversible deamidation of specific glutamine residues to glutamic acid. The chain is Protein-glutamate methylesterase/protein-glutamine glutaminase 3 from Pseudomonas syringae pv. tomato (strain ATCC BAA-871 / DC3000).